A 175-amino-acid chain; its full sequence is Pycsar effector protein RsPycTM (175 aa).

The next 3 helical transmembrane spans lie at 17–37 (AKNA…ITLL), 44–64 (PLGF…AAII), and 146–166 (AGSL…LFCI).

Its subcellular location is the cell inner membrane. Its function is as follows. Pycsar (pyrimidine cyclase system for antiphage resistance) provides immunity against bacteriophage. The pyrimidine cyclase (PycC) synthesizes cyclic nucleotides in response to infection; these serve as specific second messenger signals. The signals activate the nearby effector, leading to bacterial cell death and abortive phage infection. A clade A Pycsar system. In terms of biological role, the effector gene of a two-gene Pycsar system. Expression of this and uridylate cyclase RsPycC (AC A0A4R2TZQ0) probably confers resistance to bacteriophage. The genes are probably only expressed in response to bacteriophage infection. Probably only responds to cUMP (produced by its cognate NTP cyclase), acts by impairing membrane integrity. The polypeptide is Pycsar effector protein RsPycTM (Rhizobium sp. (strain PP-F2F-G36)).